The sequence spans 343 residues: Ubiquitin carboxyl-terminal hydrolase isozyme L5 (343 aa).

A UCH catalytic domain is found at 6 to 218 (GWCTIESDPG…IRFNLMAVIK (213 aa)). Cys83 acts as the Nucleophile in catalysis. Residue His157 is the Proton donor of the active site. The interval 242 to 266 (LSELNSGSGGDNKEESGGATPTTKE) is disordered. The ULD domain occupies 306 to 334 (NFTPLILNLIKGLAEKDNLQPLIQKAKDQ).

Belongs to the peptidase C12 family. As to quaternary structure, component of the 19S (PA700) regulatory complex of the 26S proteasome.

It is found in the cytoplasm. Its subcellular location is the nucleus. It catalyses the reaction Thiol-dependent hydrolysis of ester, thioester, amide, peptide and isopeptide bonds formed by the C-terminal Gly of ubiquitin (a 76-residue protein attached to proteins as an intracellular targeting signal).. Functionally, protease that specifically cleaves 'Lys-48'-linked polyubiquitin chains. Deubiquitinating enzyme associated with the 19S regulatory subunit of the 26S proteasome. This is Ubiquitin carboxyl-terminal hydrolase isozyme L5 (uch2) from Dictyostelium discoideum (Social amoeba).